Reading from the N-terminus, the 239-residue chain is 1-(5-phosphoribosyl)-5-[(5-phosphoribosylamino)methylideneamino] imidazole-4-carboxamide isomerase (239 aa).

Aspartate 12 functions as the Proton acceptor in the catalytic mechanism. The active-site Proton donor is aspartate 132.

This sequence belongs to the HisA/HisF family.

It localises to the cytoplasm. It carries out the reaction 1-(5-phospho-beta-D-ribosyl)-5-[(5-phospho-beta-D-ribosylamino)methylideneamino]imidazole-4-carboxamide = 5-[(5-phospho-1-deoxy-D-ribulos-1-ylimino)methylamino]-1-(5-phospho-beta-D-ribosyl)imidazole-4-carboxamide. It functions in the pathway amino-acid biosynthesis; L-histidine biosynthesis; L-histidine from 5-phospho-alpha-D-ribose 1-diphosphate: step 4/9. This is 1-(5-phosphoribosyl)-5-[(5-phosphoribosylamino)methylideneamino] imidazole-4-carboxamide isomerase from Natronomonas pharaonis (strain ATCC 35678 / DSM 2160 / CIP 103997 / JCM 8858 / NBRC 14720 / NCIMB 2260 / Gabara) (Halobacterium pharaonis).